Reading from the N-terminus, the 86-residue chain is Anti-adapter protein IraP (86 aa).

A coiled-coil region spans residues 1–36 (MKNLIAELLFKLAQKEEESKELCAQVEALEIIVTAM).

The protein belongs to the IraP family. Interacts with RssB.

It localises to the cytoplasm. In terms of biological role, inhibits RpoS proteolysis by regulating RssB activity, thereby increasing the stability of the sigma stress factor RpoS especially during phosphate starvation, but also in stationary phase and during nitrogen starvation. Its effect on RpoS stability is due to its interaction with RssB, which probably blocks the interaction of RssB with RpoS, and the consequent delivery of the RssB-RpoS complex to the ClpXP protein degradation pathway. This Escherichia coli O7:K1 (strain IAI39 / ExPEC) protein is Anti-adapter protein IraP.